The following is a 75-amino-acid chain: Molt-inhibiting hormone (75 aa).

3 disulfides stabilise this stretch: C7–C44, C24–C40, and C27–C53. An Alanine amide modification is found at A75.

Belongs to the arthropod CHH/MIH/GIH/VIH hormone family.

Its subcellular location is the secreted. Inhibits Y-organs where molting hormone (ecdysteroid) is secreted. A molting cycle is initiated when MIH secretion diminishes or stops. The chain is Molt-inhibiting hormone from Procambarus clarkii (Red swamp crayfish).